A 367-amino-acid chain; its full sequence is MTSRNYLLLTPGPLTTSRTVKEAMLFDSCTWDDDYNIGVVEQIRQQLTALATASEGYTSVLLQGSGSYAVEAVLGSALGPQDKVLIVSNGAYGARMVEMSGLMGIAHHAYDCGEVARPDVQAIDAILNADPTISHIAMVHSETTTGMLNPIDEVGALAHRYGKTYIVDAMSSFGGIPMDIATLHIDYLISSANKCIQGVPGFAFVIAREQKLAACKGRSRSLSLDLYAQWRCMEDNHGKWRFTSPTHTVLAFAQALKELAKEGGVAARHQRYQQNQRSLVAGMRALGFNTLLDDELHSPIITAFYSPEDPQYRFSEFYRRLKEQGFVIYPGKVSQSDCFRIGNIGEVYAADITALLTAIRTAMYWMK.

Lys-194 bears the N6-(pyridoxal phosphate)lysine mark.

It belongs to the class-V pyridoxal-phosphate-dependent aminotransferase family. PhnW subfamily. Homodimer. Pyridoxal 5'-phosphate is required as a cofactor.

The enzyme catalyses (2-aminoethyl)phosphonate + pyruvate = phosphonoacetaldehyde + L-alanine. Its function is as follows. Involved in phosphonate degradation. The chain is 2-aminoethylphosphonate--pyruvate transaminase from Salmonella agona (strain SL483).